We begin with the raw amino-acid sequence, 517 residues long: Quinol oxidase subunit 1 (517 aa).

The next 12 helical transmembrane spans lie at 19 to 39, 64 to 84, 98 to 118, 150 to 170, 185 to 205, 226 to 246, 271 to 291, 303 to 323, 333 to 353, 369 to 389, 412 to 432, and 460 to 480; these read VVWL…IAAM, IHGW…VIGF, QMAI…AGSP, MAYL…VTLI, IFAA…PALA, WAIL…FPLF, IYLL…TWPL, TLIL…TIFT, VGMG…QALV, VVGH…TTVF, IGMI…SVAG, and IGIP…LAYA. H65 lines the Fe(II)-heme a pocket. Cu cation-binding residues include H235, Y239, H284, and H285. A cross-link (1'-histidyl-3'-tyrosine (His-Tyr)) is located at residues 235–239; the sequence is HPVVY. H372 serves as a coordination point for heme a3. Residue H374 participates in Fe(II)-heme a binding.

It belongs to the heme-copper respiratory oxidase family.

Its subcellular location is the cell membrane. The enzyme catalyses 2 a quinol + O2 = 2 a quinone + 2 H2O. Its function is as follows. Catalyzes the reduction of oxygen to water. Subunits I, II and III form the functional core of the enzyme complex. Electrons originating in caldariella quinol are transferred to the binuclear center formed by heme A3 and Cu(B). In terms of biological role, subunit I binds heme a and the bimetallic center. The sequence is that of Quinol oxidase subunit 1 (soxB) from Sulfolobus acidocaldarius (strain ATCC 33909 / DSM 639 / JCM 8929 / NBRC 15157 / NCIMB 11770).